An 88-amino-acid chain; its full sequence is Large ribosomal subunit protein eL34 (88 aa).

The interval 41-72 (RPLNGIPRGRPNELRKLPKTKKRPERPMPNLC) is disordered.

Belongs to the eukaryotic ribosomal protein eL34 family.

In Thermococcus sibiricus (strain DSM 12597 / MM 739), this protein is Large ribosomal subunit protein eL34.